The primary structure comprises 177 residues: MIRPILKMGDSRLLRVAKPVQRFQTPELTALIEDMFDTMDAARGAGLAAPQIGVDLQVVIFGFDRNDRYPDAPAVPKTVLINPTIEPLSDAMEDGWEGCLSVPGLRGVVPRYTRLRYTGYDQHGHAIDRIAEGFHARVVQHECDHLQGILYPMRVQDFTRFGFTEILFPELPAHHND.

The Fe cation site is built by Cys99 and His141. Glu142 is an active-site residue. His145 is a binding site for Fe cation.

It belongs to the polypeptide deformylase family. It depends on Fe(2+) as a cofactor.

The enzyme catalyses N-terminal N-formyl-L-methionyl-[peptide] + H2O = N-terminal L-methionyl-[peptide] + formate. Removes the formyl group from the N-terminal Met of newly synthesized proteins. Requires at least a dipeptide for an efficient rate of reaction. N-terminal L-methionine is a prerequisite for activity but the enzyme has broad specificity at other positions. The sequence is that of Peptide deformylase 2 from Ralstonia nicotianae (strain ATCC BAA-1114 / GMI1000) (Ralstonia solanacearum).